The sequence spans 380 residues: O-antigen polymerase (380 aa).

Helical transmembrane passes span M1–P21, N27–E47, A55–I75, Y94–L114, S132–A152, F169–V189, L201–F221, I229–N249, I282–W302, L306–F326, L332–E352, and H353–M373.

The protein localises to the cell inner membrane. The enzyme catalyses n lipid-linked O-antigen repeat units = a lipid-linked O antigen + (n-1) polyisoprenyl diphosphate.. It functions in the pathway bacterial outer membrane biogenesis; LPS O-antigen biosynthesis. Functionally, polymerase involved in the biosynthesis of the lipopolysaccharide (LPS). Catalyzes the polymerization of the O-antigen repeat units on the periplasmic face of the inner membrane, leading to the formation of the lipid-linked O-antigen molecule. This chain is O-antigen polymerase, found in Shigella dysenteriae.